Consider the following 735-residue polypeptide: ATP-dependent DNA helicase Hel308 (735 aa).

Residues Gln32 and Ala50 to Thr57 contribute to the ATP site. The 165-residue stretch at Gln37–Ser201 folds into the Helicase ATP-binding domain. The short motif at Asp146–His149 is the DEAH box element. Positions Asp235–Leu431 constitute a Helicase C-terminal domain.

Belongs to the helicase family. Hel308 subfamily. In terms of assembly, monomer.

It catalyses the reaction Couples ATP hydrolysis with the unwinding of duplex DNA by translocating in the 3'-5' direction.. The catalysed reaction is ATP + H2O = ADP + phosphate + H(+). DNA-dependent ATPase and 3'-5' DNA helicase that may be involved in repair of stalled replication forks. This Aeropyrum pernix (strain ATCC 700893 / DSM 11879 / JCM 9820 / NBRC 100138 / K1) protein is ATP-dependent DNA helicase Hel308.